The chain runs to 199 residues: GTP cyclohydrolase-2 (199 aa).

Position 50 to 54 (50 to 54 (RIHSE)) interacts with GTP. Positions 55, 66, and 68 each coordinate Zn(2+). GTP is bound by residues Gln-71, 93 to 95 (EGR), and Thr-115. Asp-127 serves as the catalytic Proton acceptor. Arg-129 acts as the Nucleophile in catalysis. GTP contacts are provided by Thr-150 and Lys-155.

It belongs to the GTP cyclohydrolase II family. In terms of assembly, homodimer. Zn(2+) serves as cofactor.

The catalysed reaction is GTP + 4 H2O = 2,5-diamino-6-hydroxy-4-(5-phosphoribosylamino)-pyrimidine + formate + 2 phosphate + 3 H(+). It participates in cofactor biosynthesis; riboflavin biosynthesis; 5-amino-6-(D-ribitylamino)uracil from GTP: step 1/4. Functionally, catalyzes the conversion of GTP to 2,5-diamino-6-ribosylamino-4(3H)-pyrimidinone 5'-phosphate (DARP), formate and pyrophosphate. The sequence is that of GTP cyclohydrolase-2 from Buchnera aphidicola subsp. Baizongia pistaciae (strain Bp).